Consider the following 251-residue polypeptide: uncharacterized protein (251 aa).

The a divalent metal cation site is built by histidine 6, histidine 8, glutamate 90, histidine 130, histidine 154, and aspartate 202.

Belongs to the metallo-dependent hydrolases superfamily. TatD-type hydrolase family. It depends on a divalent metal cation as a cofactor.

This is an uncharacterized protein from Haemophilus influenzae (strain ATCC 51907 / DSM 11121 / KW20 / Rd).